The chain runs to 572 residues: Proline--tRNA ligase (572 aa).

The protein belongs to the class-II aminoacyl-tRNA synthetase family. ProS type 1 subfamily. As to quaternary structure, homodimer.

The protein resides in the cytoplasm. The enzyme catalyses tRNA(Pro) + L-proline + ATP = L-prolyl-tRNA(Pro) + AMP + diphosphate. Its function is as follows. Catalyzes the attachment of proline to tRNA(Pro) in a two-step reaction: proline is first activated by ATP to form Pro-AMP and then transferred to the acceptor end of tRNA(Pro). As ProRS can inadvertently accommodate and process non-cognate amino acids such as alanine and cysteine, to avoid such errors it has two additional distinct editing activities against alanine. One activity is designated as 'pretransfer' editing and involves the tRNA(Pro)-independent hydrolysis of activated Ala-AMP. The other activity is designated 'posttransfer' editing and involves deacylation of mischarged Ala-tRNA(Pro). The misacylated Cys-tRNA(Pro) is not edited by ProRS. This is Proline--tRNA ligase from Escherichia coli O7:K1 (strain IAI39 / ExPEC).